The sequence spans 926 residues: DNA topoisomerase 3-alpha (926 aa).

A Toprim domain is found at T10–S154. E16, D123, and D125 together coordinate Mg(2+). The 433-residue stretch at N172–L604 folds into the Topo IA-type catalytic domain. The interval S219 to Q224 is interaction with DNA. Y342 (O-(5'-phospho-DNA)-tyrosine intermediate) is an active-site residue. A C4-type zinc finger spans residues C642–C670. Disordered stretches follow at residues S740–N760 and H775–C806. The span at T750–N760 shows a compositional bias: polar residues. The CCHC-type 1 zinc-finger motif lies at C767–S782. Residues C806, C809, C831, and C836 each contribute to the Zn(2+) site. A GRF-type zinc finger spans residues C806 to I845. Positions S849–V890 are disordered. Over residues G873 to G884 the composition is skewed to gly residues. A CCHC-type 2 zinc finger spans residues R901–N917.

It belongs to the type IA topoisomerase family. In terms of assembly, component of the RMI complex, containing at least TOP3A and RMI1. The RMI complex interacts with RECQL4A. Mg(2+) serves as cofactor.

It catalyses the reaction ATP-independent breakage of single-stranded DNA, followed by passage and rejoining.. In terms of biological role, releases the supercoiling and torsional tension of DNA introduced during the DNA replication and transcription by transiently cleaving and rejoining one strand of the DNA duplex. Introduces a single-strand break via transesterification at a target site in duplex DNA. The scissile phosphodiester is attacked by the catalytic tyrosine of the enzyme, resulting in the formation of a DNA-(5'-phosphotyrosyl)-enzyme intermediate and the expulsion of a 3'-OH DNA strand. The free DNA strand then undergoes passage around the unbroken strand thus removing DNA supercoils. Finally, in the religation step, the DNA 3'-OH attacks the covalent intermediate to expel the active-site tyrosine and restore the DNA phosphodiester backbone. Essential component of the RMI complex, a complex that plays an important role in the resolution step of homologous recombination, in a process called Holliday Junction dissolution, to limit DNA crossover formation in cells. Together with RMI1, is essential for the resolution of meiotic recombination intermediates, a step that prevents entanglement of the parental chromosomes. May have DNA decatenation activity. The chain is DNA topoisomerase 3-alpha (TOP3A) from Arabidopsis thaliana (Mouse-ear cress).